Here is a 160-residue protein sequence, read N- to C-terminus: MAKQKKHPTGTIAQNKKARHDYFIEHRFEAGMVLAGWEVKSLRAGKAQLVDSYVLLKDGEAWLLGSHFTPLTTASTHVIADPTRSRKLLLNQRELEKLFAAVQQKGYACVCLSLYWSKHLVKCEIALGKGKKEYDKRHTERERDSDRELQRAVRTKGKED.

Residues Lys131–Asp160 form a disordered region.

It belongs to the SmpB family.

It is found in the cytoplasm. Functionally, required for rescue of stalled ribosomes mediated by trans-translation. Binds to transfer-messenger RNA (tmRNA), required for stable association of tmRNA with ribosomes. tmRNA and SmpB together mimic tRNA shape, replacing the anticodon stem-loop with SmpB. tmRNA is encoded by the ssrA gene; the 2 termini fold to resemble tRNA(Ala) and it encodes a 'tag peptide', a short internal open reading frame. During trans-translation Ala-aminoacylated tmRNA acts like a tRNA, entering the A-site of stalled ribosomes, displacing the stalled mRNA. The ribosome then switches to translate the ORF on the tmRNA; the nascent peptide is terminated with the 'tag peptide' encoded by the tmRNA and targeted for degradation. The ribosome is freed to recommence translation, which seems to be the essential function of trans-translation. In Pseudomonas fluorescens (strain ATCC BAA-477 / NRRL B-23932 / Pf-5), this protein is SsrA-binding protein.